Consider the following 359-residue polypeptide: Putative ankyrin repeat protein R190 (359 aa).

ANK repeat units follow at residues 72–103, 105–133, 142–173, 203–234, 236–260, 261–287, and 288–317; these read RLME…DFRC, DCVI…DLNR, DEII…SISI, LGNL…DINN, HEYS…YGLI, IHDD…IGHK, and PSKQ…DLSD.

In Acanthamoeba polyphaga (Amoeba), this protein is Putative ankyrin repeat protein R190.